We begin with the raw amino-acid sequence, 1142 residues long: SNF1-activating kinase 1 (1142 aa).

Positions 22-41 are disordered; sequence ELEKSGTSSSVSLRSPTKSS. T43 is modified (phosphothreonine). Residues 82–93 are compositionally biased toward polar residues; it reads QHQQHISSSLAK. A disordered region spans residues 82 to 107; the sequence is QHQQHISSSLAKTPTTTSSFCSSGSS. The segment covering 94–107 has biased composition (low complexity); it reads TPTTTSSFCSSGSS. A Protein kinase domain is found at 133-448; the sequence is YEIIKELGHG…IPAIKKHPFV (316 aa). ATP is bound by residues 139–147 and K162; that span reads LGHGQHGKV. The active-site Proton acceptor is D277. Disordered regions lie at residues 634–678, 694–799, 825–875, 919–971, 1005–1027, and 1066–1142; these read SPEA…VLPQ, NSLL…NSPI, SHFN…AYSE, KSSL…QKGS, SQPISKPGPLVLPKRLDQKKATT, and STNA…SALP. Polar residues predominate over residues 640 to 656; sequence SVSSVPNLPSAPSSTRL. Positions 694–706 are enriched in low complexity; sequence NSLLRNSSSHLTS. A compositionally biased stretch (polar residues) spans 707 to 741; sequence YNSGRPSSRTGRMNSRNQNLPKIPNSLSKISTTKL. The segment covering 742–751 has biased composition (basic and acidic residues); the sequence is TELRVPKDSE. The span at 785-799 shows a compositional bias: polar residues; sequence NINSSDKSGSKNSPI. Composition is skewed to low complexity over residues 835-868 and 920-936; these read SSQSSVTSSGSESDSELSSTSSSCTSGTQSRNSS and SSLNLEPPSVSSSSSSS. Residues 958–971 show a composition bias toward polar residues; sequence SKLSELSNSPQKGS. S964 is subject to Phosphoserine. The segment covering 1096-1111 has biased composition (basic and acidic residues); that stretch reads NDEHARNTSCHGDKGQ. Position 1126 is a phosphoserine (S1126). Positions 1133–1142 are enriched in basic and acidic residues; it reads NEEKRRSALP.

The protein belongs to the protein kinase superfamily. Ser/Thr protein kinase family. As to quaternary structure, associates with the SNF1 kinase complex. Interacts with SNF1 and REG1. In terms of processing, autophosphorylated.

The protein resides in the cytoplasm. It carries out the reaction L-seryl-[protein] + ATP = O-phospho-L-seryl-[protein] + ADP + H(+). It catalyses the reaction L-threonyl-[protein] + ATP = O-phospho-L-threonyl-[protein] + ADP + H(+). In terms of biological role, serine/threonine-protein kinase that phosphorylates SNF1, the catalytic subunit of the SNF1 kinase complex. Acts as an activator of the SNF1 kinase complex and controls its nuclear localization upon glucose and nitrogen depletion. Also required for SNF1 kinase activation under other stress conditions like alkaline pH or presence of cadmium. The protein is SNF1-activating kinase 1 (SAK1) of Saccharomyces cerevisiae (strain ATCC 204508 / S288c) (Baker's yeast).